Reading from the N-terminus, the 138-residue chain is MFVPESDPLRGDRRLSPAAAKQLAPQALAYLGDALYEFHVRLRLLLPAQRSHQVHQSVVGAVRAERQAELLVSLLPLLTAEELEIVRRGRNAAGRVPRRLTGEYYQQATGLETLLGYLYLCDPQRLQALLQQLPVTEY.

Aspartate 33 is a catalytic residue.

It belongs to the MrnC RNase family. In terms of assembly, homodimer. The cofactor is Mg(2+).

Its subcellular location is the cytoplasm. In terms of biological role, involved in correct processing of both the 5' and 3' ends of 23S rRNA precursor. Processes 30S rRNA precursor transcript even in absence of ribonuclease 3 (Rnc); Rnc processes 30S rRNA into smaller rRNA precursors. The polypeptide is Mini-ribonuclease 3 (Synechococcus sp. (strain ATCC 27144 / PCC 6301 / SAUG 1402/1) (Anacystis nidulans)).